We begin with the raw amino-acid sequence, 291 residues long: tRNA U34 carboxymethyltransferase (291 aa).

Carboxy-S-adenosyl-L-methionine contacts are provided by residues K61, W75, K80, G100, 122–124 (DPS), 149–150 (VE), Y169, and R284.

Belongs to the class I-like SAM-binding methyltransferase superfamily. CmoB family. In terms of assembly, homotetramer.

It carries out the reaction carboxy-S-adenosyl-L-methionine + 5-hydroxyuridine(34) in tRNA = 5-carboxymethoxyuridine(34) in tRNA + S-adenosyl-L-homocysteine + H(+). Functionally, catalyzes carboxymethyl transfer from carboxy-S-adenosyl-L-methionine (Cx-SAM) to 5-hydroxyuridine (ho5U) to form 5-carboxymethoxyuridine (cmo5U) at position 34 in tRNAs. This chain is tRNA U34 carboxymethyltransferase, found in Campylobacter jejuni subsp. jejuni serotype O:23/36 (strain 81-176).